A 900-amino-acid chain; its full sequence is Isoleucine--tRNA ligase (900 aa).

The 'HIGH' region signature appears at 59–69; that stretch reads PYANGNIHMGH. Glu550 lines the L-isoleucyl-5'-AMP pocket. Positions 591-595 match the 'KMSKS' region motif; it reads KMSKS. Lys594 lines the ATP pocket. 4 residues coordinate Zn(2+): Cys876, Cys879, Cys892, and Cys895.

It belongs to the class-I aminoacyl-tRNA synthetase family. IleS type 1 subfamily. Monomer. Zn(2+) serves as cofactor.

It localises to the cytoplasm. The catalysed reaction is tRNA(Ile) + L-isoleucine + ATP = L-isoleucyl-tRNA(Ile) + AMP + diphosphate. Functionally, catalyzes the attachment of isoleucine to tRNA(Ile). As IleRS can inadvertently accommodate and process structurally similar amino acids such as valine, to avoid such errors it has two additional distinct tRNA(Ile)-dependent editing activities. One activity is designated as 'pretransfer' editing and involves the hydrolysis of activated Val-AMP. The other activity is designated 'posttransfer' editing and involves deacylation of mischarged Val-tRNA(Ile). This chain is Isoleucine--tRNA ligase, found in Onion yellows phytoplasma (strain OY-M).